A 464-amino-acid chain; its full sequence is Integrator complex subunit 12 (464 aa).

Residues 42–98 form a disordered region; it reads GNDSVYRPQPKEVEQPKAMLSKVKPETKASSSTPSSSILSKPLASEKVKKEAEKRTA. A compositionally biased stretch (low complexity) spans 69–84; that stretch reads KASSSTPSSSILSKPL. Over residues 85 to 98 the composition is skewed to basic and acidic residues; that stretch reads ASEKVKKEAEKRTA. The PHD-type zinc-finger motif lies at 156–212; that stretch reads GLACVVCRQMTVFSGNQLVECQECHNLYHQDCHRPQVTDKDVNDPRLVWYCARCTRQ. Disordered regions lie at residues 216-252 and 312-445; these read MAQK…LKSK and TNSQ…SQLN. The segment covering 227 to 239 has biased composition (low complexity); sequence PAPSAVSAVTPVA. Positions 312–329 are enriched in polar residues; the sequence is TNSQATSGKPPSLSSVQK. The segment covering 339 to 371 has biased composition (low complexity); sequence SKAGSVSKSGSGGSSSTIPLKPLPPLILGKTGL. A compositionally biased stretch (polar residues) spans 372–382; sequence SRSMSSDNVSK. A compositionally biased stretch (low complexity) spans 384 to 421; sequence GLPSPNPSSSGSVSSLSSQLGSNNGSSNTAGSNVNSSN. Positions 428 to 445 are enriched in polar residues; it reads SMQQSGAKGPTSQESQLN.

The protein belongs to the Integrator subunit 12 family. Component of the Integrator complex, composed of core subunits INTS1, INTS2, INTS3, INTS4, INTS5, INTS6, INTS7, INTS8, INTS9/RC74, INTS10, INTS11/CPSF3L, INTS12, INTS13, INTS14 and INTS15. The core complex associates with protein phosphatase 2A subunits PPP2CA and PPP2R1A, to form the Integrator-PP2A (INTAC) complex.

The protein resides in the nucleus. Its function is as follows. Component of the integrator complex, a multiprotein complex that terminates RNA polymerase II (Pol II) transcription in the promoter-proximal region of genes. The integrator complex provides a quality checkpoint during transcription elongation by driving premature transcription termination of transcripts that are unfavorably configured for transcriptional elongation: the complex terminates transcription by (1) catalyzing dephosphorylation of the C-terminal domain (CTD) of Pol II subunit POLR2A/RPB1 and SUPT5H/SPT5, (2) degrading the exiting nascent RNA transcript via endonuclease activity and (3) promoting the release of Pol II from bound DNA. The integrator complex is also involved in terminating the synthesis of non-coding Pol II transcripts, such as enhancer RNAs (eRNAs), small nuclear RNAs (snRNAs), telomerase RNAs and long non-coding RNAs (lncRNAs). This Xenopus laevis (African clawed frog) protein is Integrator complex subunit 12 (ints12).